Here is a 259-residue protein sequence, read N- to C-terminus: Major cell-binding factor (259 aa).

The N-terminal stretch at 1–26 (MVFRKSLLKLAVFALGACVAFSNANA) is a signal peptide.

Belongs to the bacterial solute-binding protein 3 family.

The protein localises to the cell surface. Common antigen and a major cell adherence molecule. Most probably involved, with PEB1C, in a binding-protein-dependent transport system for an amino acid. May be involved in binding to intestinal cells. This is Major cell-binding factor (peb1A) from Campylobacter jejuni subsp. jejuni serotype O:2 (strain ATCC 700819 / NCTC 11168).